Here is a 138-residue protein sequence, read N- to C-terminus: Superoxide dismutase [Mn] (138 aa).

Mn(2+)-binding residues include S1, H49, D133, and H137.

It belongs to the iron/manganese superoxide dismutase family. Mn(2+) is required as a cofactor.

The catalysed reaction is 2 superoxide + 2 H(+) = H2O2 + O2. Functionally, destroys superoxide anion radicals which are normally produced within the cells and which are toxic to biological systems. In Mycobacterium marinum, this protein is Superoxide dismutase [Mn] (sodA).